The following is a 189-amino-acid chain: Small ribosomal subunit protein uS5 (189 aa).

An S5 DRBM domain is found at 23–86; that stretch reads FIDKLVHINR…ESAKREMIYV (64 aa).

This sequence belongs to the universal ribosomal protein uS5 family. As to quaternary structure, part of the 30S ribosomal subunit. Contacts proteins S4 and S8.

With S4 and S12 plays an important role in translational accuracy. Functionally, located at the back of the 30S subunit body where it stabilizes the conformation of the head with respect to the body. The sequence is that of Small ribosomal subunit protein uS5 from Bartonella bacilliformis (strain ATCC 35685 / KC583 / Herrer 020/F12,63).